A 231-amino-acid chain; its full sequence is Adenylate kinase (231 aa).

ATP is bound at residue 12–17 (GAGKGT). Residues 32-61 (STGDMLRAAVKAKTPLGLEVKKIMESGGLV) form an NMP region. AMP is bound by residues T33, R38, 59–61 (GLV), 87–90 (GFPR), and Q94. The LID stretch occupies residues 124 to 161 (GRLIHPASGRTYHRRYNPPKVADKDDVTGEPLIQRADD). ATP-binding positions include R125 and 134–135 (TY). AMP is bound by residues R158 and R169. G205 provides a ligand contact to ATP.

This sequence belongs to the adenylate kinase family. In terms of assembly, monomer.

The protein localises to the cytoplasm. The enzyme catalyses AMP + ATP = 2 ADP. The protein operates within purine metabolism; AMP biosynthesis via salvage pathway; AMP from ADP: step 1/1. Catalyzes the reversible transfer of the terminal phosphate group between ATP and AMP. Plays an important role in cellular energy homeostasis and in adenine nucleotide metabolism. This Coxiella burnetii (strain CbuK_Q154) (Coxiella burnetii (strain Q154)) protein is Adenylate kinase.